The sequence spans 207 residues: Large ribosomal subunit protein uL4 (207 aa).

The tract at residues 48 to 75 (THSVKNRSAVRGGGRKPWRQKGTGRARQ) is disordered. Basic residues predominate over residues 60–71 (GGRKPWRQKGTG).

This sequence belongs to the universal ribosomal protein uL4 family. Part of the 50S ribosomal subunit.

In terms of biological role, one of the primary rRNA binding proteins, this protein initially binds near the 5'-end of the 23S rRNA. It is important during the early stages of 50S assembly. It makes multiple contacts with different domains of the 23S rRNA in the assembled 50S subunit and ribosome. Its function is as follows. Forms part of the polypeptide exit tunnel. This chain is Large ribosomal subunit protein uL4, found in Staphylococcus carnosus (strain TM300).